Consider the following 156-residue polypeptide: Small ribosomal subunit protein uS7 (156 aa).

The protein belongs to the universal ribosomal protein uS7 family. Part of the 30S ribosomal subunit. Contacts proteins S9 and S11.

Functionally, one of the primary rRNA binding proteins, it binds directly to 16S rRNA where it nucleates assembly of the head domain of the 30S subunit. Is located at the subunit interface close to the decoding center, probably blocks exit of the E-site tRNA. This chain is Small ribosomal subunit protein uS7, found in Synechococcus sp. (strain WH7803).